Here is a 552-residue protein sequence, read N- to C-terminus: Cytochrome P450 97B1, chloroplastic (552 aa).

The transit peptide at 1 to 52 directs the protein to the chloroplast; it reads MVAAPISTVKLTDANLHTRFHSSSSSTPSTLSLPLSLHFHFSSHSKRFSSIR. Heme is bound at residue Cys-528.

The protein belongs to the cytochrome P450 family. The cofactor is heme.

It localises to the plastid. It is found in the chloroplast membrane. In Pisum sativum (Garden pea), this protein is Cytochrome P450 97B1, chloroplastic (CYP97B1).